Reading from the N-terminus, the 306-residue chain is B- and T-lymphocyte attenuator (306 aa).

Residues 1–29 (MKTVPAMLGTPRLFREFFILHLGLWSILC) form the signal peptide. The Extracellular portion of the chain corresponds to 30-183 (EKATKRNDEE…ERPGRTWLLY (154 aa)). Positions 37-139 (DEECPVQLTI…SQVINSHSVT (103 aa)) constitute an Ig-like V-type domain. Cystine bridges form between Cys-40–Cys-69, Cys-64–Cys-124, and Cys-78–Cys-85. 6 N-linked (GlcNAc...) asparagine glycosylation sites follow: Asn-74, Asn-81, Asn-101, Asn-119, Asn-148, and Asn-165. The chain crosses the membrane as a helical span at residues 184 to 204 (TLLPLGALLLLLACVCLLCFL). At 205 to 306 (KRIQGKEKKP…TEYASICVRS (102 aa)) the chain is on the cytoplasmic side.

As to quaternary structure, interacts with tyrosine phosphatases PTPN6/SHP-1 and PTPN11/SHP-2. Interacts with TNFRSF14/HVEM (via cysteine-rich domain 1). In terms of processing, phosphorylated on Tyr residues by TNFRSF14 and by antigen receptors cross-linking, both inducing association with PTPN6 and PTPN11. Post-translationally, N-glycosylated. Expressed in splenic T- and B-cells as well as lymph node tissues but very weakly in somatic tissues. Also expressed in macrophages, NK cells and dendritic cells. A polymorphic tissue distribution between several strains is seen.

It localises to the cell membrane. Inhibitory receptor on lymphocytes that negatively regulates antigen receptor signaling via PTPN6/SHP-1 and PTPN11/SHP-2. May interact in cis (on the same cell) or in trans (on other cells) with TNFRSF14. In cis interactions, appears to play an immune regulatory role inhibiting in trans interactions in naive T cells to maintain a resting state. In trans interactions, can predominate during adaptive immune response to provide survival signals to effector T cells. The protein is B- and T-lymphocyte attenuator of Mus musculus (Mouse).